Consider the following 300-residue polypeptide: Protein phosphatase 2C 1 (300 aa).

Positions 23-298 (IFAASEMQGW…DNMTTILVYL (276 aa)) constitute a PPM-type phosphatase domain. Residues Asp-57, Gly-58, Asp-237, and Asp-289 each contribute to the Mn(2+) site.

This sequence belongs to the PP2C family. Mg(2+) serves as cofactor. It depends on Mn(2+) as a cofactor. The N-terminus is blocked.

The protein localises to the membrane. The catalysed reaction is O-phospho-L-seryl-[protein] + H2O = L-seryl-[protein] + phosphate. The enzyme catalyses O-phospho-L-threonyl-[protein] + H2O = L-threonyl-[protein] + phosphate. Its function is as follows. Serine and threonine phosphatase. This chain is Protein phosphatase 2C 1, found in Paramecium tetraurelia.